The following is a 444-amino-acid chain: Phosphoglucosamine mutase (444 aa).

The active-site Phosphoserine intermediate is Ser102. Ser102, Asp241, Asp243, and Asp245 together coordinate Mg(2+). A Phosphoserine modification is found at Ser102.

This sequence belongs to the phosphohexose mutase family. Requires Mg(2+) as cofactor. Post-translationally, activated by phosphorylation.

The catalysed reaction is alpha-D-glucosamine 1-phosphate = D-glucosamine 6-phosphate. Catalyzes the conversion of glucosamine-6-phosphate to glucosamine-1-phosphate. The sequence is that of Phosphoglucosamine mutase from Leptothrix cholodnii (strain ATCC 51168 / LMG 8142 / SP-6) (Leptothrix discophora (strain SP-6)).